The sequence spans 311 residues: Probable deoxyhypusine synthase (311 aa).

K284 (nucleophile) is an active-site residue.

Belongs to the deoxyhypusine synthase family. NAD(+) is required as a cofactor.

It catalyses the reaction [eIF5A protein]-L-lysine + spermidine = [eIF5A protein]-deoxyhypusine + propane-1,3-diamine. The protein operates within protein modification; eIF5A hypusination. In terms of biological role, catalyzes the NAD-dependent oxidative cleavage of spermidine and the subsequent transfer of the butylamine moiety of spermidine to the epsilon-amino group of a specific lysine residue of the eIF-5A precursor protein to form the intermediate deoxyhypusine residue. This is Probable deoxyhypusine synthase from Picrophilus torridus (strain ATCC 700027 / DSM 9790 / JCM 10055 / NBRC 100828 / KAW 2/3).